The sequence spans 414 residues: Serine/threonine transporter SstT (414 aa).

8 consecutive transmembrane segments (helical) span residues 22 to 42 (GLVL…TIGF), 54 to 74 (IFVK…VMAA), 89 to 109 (IIVL…IAGF), 148 to 168 (AIFK…GLAL), 189 to 209 (IVHV…AETL), 223 to 243 (LLAV…PILV), 305 to 325 (MAGA…TLGL), and 337 to 357 (IVAA…LLLI).

It belongs to the dicarboxylate/amino acid:cation symporter (DAACS) (TC 2.A.23) family.

Its subcellular location is the cell inner membrane. The catalysed reaction is L-serine(in) + Na(+)(in) = L-serine(out) + Na(+)(out). It catalyses the reaction L-threonine(in) + Na(+)(in) = L-threonine(out) + Na(+)(out). Its function is as follows. Involved in the import of serine and threonine into the cell, with the concomitant import of sodium (symport system). This is Serine/threonine transporter SstT from Haemophilus influenzae (strain 86-028NP).